The following is a 345-amino-acid chain: Metal-dependent phosphohydrolase cns2 (345 aa).

One can recognise an HD domain in the interval 70–171; it reads RLEHSVGAFI…QLCADRLDYA (102 aa).

Interacts with cns1.

It is found in the lipid droplet. It functions in the pathway secondary metabolite biosynthesis. Its function is as follows. Metal-dependent phosphohydrolase; part of the gene cluster that mediates the biosynthesis of cordycepin (COR) and pentostatin (PTN), two adenosine analogs with related bioactivity profiles as both mimic adenosine and can inhibit some of the processes that are adenosine dependent. Within the pathway, cns2 catalyzes dephosphorylation of 3'-AMP to produce 2'-carbonyl-3'-deoxyadenosine (2'-C-3'-dA). The first step of cordycepin biosynthesis involves hydroxyl phosphorylation of the 3'-OH position on adenosine to produce adenosine-3'-monophosphate (3'-AMP), catalyzed by kinase activity of cns3. Next, 3'-AMP is dephosphorylated to 2'-carbonyl-3'-deoxyadenosine by cns2, which is finally converted to cordycepin (3'-deoxyadenosine) by the oxidoreductase cns1. The chain is Metal-dependent phosphohydrolase cns2 from Cordyceps militaris (strain CM01) (Caterpillar fungus).